We begin with the raw amino-acid sequence, 125 residues long: Fluoride-specific ion channel FluC (125 aa).

The next 4 membrane-spanning stretches (helical) occupy residues 5–25 (LLVA…GALV), 29–49 (LGAG…FLIG), 66–86 (LFLA…SYET), and 95–115 (VGKA…LAFL). Residues Gly74 and Thr77 each contribute to the Na(+) site.

The protein belongs to the fluoride channel Fluc/FEX (TC 1.A.43) family.

It localises to the cell inner membrane. It carries out the reaction fluoride(in) = fluoride(out). Its activity is regulated as follows. Na(+) is not transported, but it plays an essential structural role and its presence is essential for fluoride channel function. Fluoride-specific ion channel. Important for reducing fluoride concentration in the cell, thus reducing its toxicity. The protein is Fluoride-specific ion channel FluC of Thermus thermophilus (strain ATCC 27634 / DSM 579 / HB8).